We begin with the raw amino-acid sequence, 253 residues long: Chitooligosaccharide deacetylase (253 aa).

2 residues coordinate Mg(2+): H61 and H126.

The protein belongs to the YdjC deacetylase family. ChbG subfamily. Homodimer. The cofactor is Mg(2+).

It localises to the cytoplasm. It carries out the reaction N,N'-diacetylchitobiose + H2O = N-acetyl-beta-D-glucosaminyl-(1-&gt;4)-D-glucosamine + acetate. The enzyme catalyses diacetylchitobiose-6'-phosphate + H2O = N'-monoacetylchitobiose-6'-phosphate + acetate. Its pathway is glycan degradation; chitin degradation. Involved in the degradation of chitin. ChbG is essential for growth on the acetylated chitooligosaccharides chitobiose and chitotriose but is dispensable for growth on cellobiose and chitosan dimer, the deacetylated form of chitobiose. Deacetylation of chitobiose-6-P and chitotriose-6-P is necessary for both the activation of the chb promoter by the regulatory protein ChbR and the hydrolysis of phosphorylated beta-glucosides by the phospho-beta-glucosidase ChbF. Catalyzes the removal of only one acetyl group from chitobiose-6-P to yield monoacetylchitobiose-6-P, the inducer of ChbR and the substrate of ChbF. In Yersinia pseudotuberculosis serotype O:1b (strain IP 31758), this protein is Chitooligosaccharide deacetylase.